The primary structure comprises 552 residues: Cycloheximide resistance protein (552 aa).

The disordered stretch occupies residues 46 to 70 (VLNSSDKSQSSENKEQTEGDQATIQ). Over residues 47 to 56 (LNSSDKSQSS) the composition is skewed to polar residues. 12 helical membrane passes run 100–120 (AIAA…SAIY), 137–157 (LATL…LFWS), 168–188 (TPLY…TALS), 194–213 (LSVL…STGG), 225–246 (YSIA…GPLI), 262–282 (WSFW…SFSL), 346–362 (IYIA…FESV), 381–399 (YVST…LPTV), 419–439 (LPPA…FGWT), 445–464 (NWFV…FIIF), 477–494 (VEYL…RSVS), and 518–539 (WGSS…FFYL).

It belongs to the major facilitator superfamily. CAR1 family.

The protein resides in the membrane. Probable transporter. Confers resistance to cycloheximide. In Candida maltosa (Yeast), this protein is Cycloheximide resistance protein (CYHR).